We begin with the raw amino-acid sequence, 267 residues long: 3-methyl-2-oxobutanoate hydroxymethyltransferase (267 aa).

Mg(2+) is bound by residues Asp42 and Asp86. Residues 42 to 43, Asp86, and Lys116 contribute to the 3-methyl-2-oxobutanoate site; that span reads DS. Glu118 is a Mg(2+) binding site. The active-site Proton acceptor is Glu185.

Belongs to the PanB family. Homodecamer; pentamer of dimers. It depends on Mg(2+) as a cofactor.

It localises to the cytoplasm. It catalyses the reaction 3-methyl-2-oxobutanoate + (6R)-5,10-methylene-5,6,7,8-tetrahydrofolate + H2O = 2-dehydropantoate + (6S)-5,6,7,8-tetrahydrofolate. The protein operates within cofactor biosynthesis; (R)-pantothenate biosynthesis; (R)-pantoate from 3-methyl-2-oxobutanoate: step 1/2. Its function is as follows. Catalyzes the reversible reaction in which hydroxymethyl group from 5,10-methylenetetrahydrofolate is transferred onto alpha-ketoisovalerate to form ketopantoate. The chain is 3-methyl-2-oxobutanoate hydroxymethyltransferase from Parasynechococcus marenigrum (strain WH8102).